Consider the following 230-residue polypeptide: 7-cyano-7-deazaguanine synthase (230 aa).

Leu10–Ala20 is an ATP binding site. Zn(2+) contacts are provided by Cys191, Cys199, Cys202, and Cys205.

This sequence belongs to the QueC family. It depends on Zn(2+) as a cofactor.

The enzyme catalyses 7-carboxy-7-deazaguanine + NH4(+) + ATP = 7-cyano-7-deazaguanine + ADP + phosphate + H2O + H(+). It functions in the pathway purine metabolism; 7-cyano-7-deazaguanine biosynthesis. Catalyzes the ATP-dependent conversion of 7-carboxy-7-deazaguanine (CDG) to 7-cyano-7-deazaguanine (preQ(0)). This chain is 7-cyano-7-deazaguanine synthase, found in Gloeothece citriformis (strain PCC 7424) (Cyanothece sp. (strain PCC 7424)).